The primary structure comprises 434 residues: MSRLSKEEISERLLELIKDETKPAIGCTEPVAVAFTVATGKKYMAGEVLKIDLKVSKNILKNGKSVTIPNTEVCGLDIAGALGGICGDPEEGLFVFKNVNKDYLDKAREMIKNKVVTLNPIENTDPVFVEATLKGEKDEVIAILEGGHTNIERIIVNGKIAFEKDNKNEKDNKDCDFMKELSLKDIREITEDISIEKLGFIMDGIEMNKEAAKEGLKRQKGLTLGSSLLKLQQEGKLGKDSATIARILTAAGSDLRMGGGMCPIMTSGGSGNQGLCVILPITVVAEDIKAPKEKLQRAVFFGHAVNNFVKKYTGKLSAICGCAIAAGIGATAGIAWLLGGKDKEINGAILNMLANLTGMVCDGAKGSCAIKLSTSASEAVISAYLALNDIIVPNNTGIIGNTVEDTINNLGMLCKDGFYKADDVMLSIACKEVI.

It belongs to the UPF0597 family.

This is UPF0597 protein CLI_2075 from Clostridium botulinum (strain Langeland / NCTC 10281 / Type F).